A 660-amino-acid polypeptide reads, in one-letter code: Pentatricopeptide repeat-containing protein At1g03560, mitochondrial (660 aa).

Residues 1–12 constitute a mitochondrion transit peptide; sequence MRRFYRKPFSVP. PPR repeat units follow at residues 151 to 185, 186 to 220, 221 to 255, 256 to 290, 291 to 325, 326 to 360, 361 to 395, 396 to 430, 431 to 465, 466 to 496, 502 to 536, 537 to 571, 574 to 605, and 606 to 640; these read NLEC…EFPM, TVSA…GIEP, TLYT…RIKP, DIVT…GHEA, DKIT…GIQV, PPHA…GSKP, NVAI…GFKP, DVVT…GLAI, NSMF…GCTR, DSYC…MEEE, TVYT…GITP, TAAC…GVIL, ACED…GREV, and PGRI…GYER.

The protein belongs to the PPR family. P subfamily.

Its subcellular location is the mitochondrion. The sequence is that of Pentatricopeptide repeat-containing protein At1g03560, mitochondrial from Arabidopsis thaliana (Mouse-ear cress).